Reading from the N-terminus, the 591-residue chain is MDDLDALLADLESTTSHISKRPVFLSEETPYSYPTGNHTYQEIAVPPPVPPPPSSEALNGTILDPLDQWQPSGSRFIHQQPQSSSPVYGSSAKTSSVSNPQDGVGSPCSRVGEEEHVYSFPNKQKSAESSPTVMSTSLGSNLSELDRLLLELNAVQHNPPGFPADEANSGPPLPGALSPHYGVPETNSPLGGKAGPLTKEKPKRNGGRGLEDVRPSVESLLDELESSVPSPVPAITVNQGEMSSPQRVTSTQQQTRISASSATRELDELMASLSDFRIQGLEQRADGERCWAADWPRDGGRSSPGGQDEGGFMAQGKTGSSSPPGGPPKPGSQLDSMLGSLQSDLNKLGVATVAKGVCGACKKPIAGQVVTAMGKTWHPEHFVCTHCQEEIGSRNFFERDGQPYCEKDYHNLFSPRCYYCNGPILDKVVTALDRTWHPEHFFCAQCGAFFGPEGFHEKDGKAYCRKDYFDMFAPKCGGCARAILENYISALNTLWHPECFVCRECFTPFVNGSFFEHDGQPYCEVHYHERRGSLCSGCQKPITGRCITAMAKKFHPEHFVCAFCLKQLNKGTFKEQNDKPYCQNCFLKLFC.

The residue at position 1 (M1) is an N-acetylmethionine. Residues 3–15 (DLDALLADLESTT) carry the LD motif 1 motif. The disordered stretch occupies residues 17–138 (HISKRPVFLS…SSPTVMSTSL (122 aa)). Y31 carries the phosphotyrosine; by PTK6 modification. Residues 45–54 (VPPPVPPPPS) show a composition bias toward pro residues. Over residues 69 to 101 (WQPSGSRFIHQQPQSSSPVYGSSAKTSSVSNPQ) the composition is skewed to polar residues. A phosphoserine mark is found at S83 and S85. Residue Y88 is modified to Phosphotyrosine. S106 is subject to Phosphoserine. Residue Y118 is modified to Phosphotyrosine; by PTK6. Phosphoserine is present on residues S119, S126, and S130. A compositionally biased stretch (polar residues) spans 121–137 (PNKQKSAESSPTVMSTS). T132 bears the Phosphothreonine mark. 3 positions are modified to phosphoserine: S137, S140, and S143. An LD motif 2 motif is present at residues 144-156 (ELDRLLLELNAVQ). Residues 156–213 (QHNPPGFPADEANSGPPLPGALSPHYGVPETNSPLGGKAGPLTKEKPKRNGGRGLEDV) are disordered. At Y181 the chain carries Phosphotyrosine. The short motif at 216–228 (SVESLLDELESSV) is the LD motif 3 element. S230 is modified (phosphoserine). The disordered stretch occupies residues 237-260 (VNQGEMSSPQRVTSTQQQTRISAS). The residue at position 244 (S244) is a Phosphoserine; by CDK5. Residues S250, S258, S261, and S272 each carry the phosphoserine modification. The LD motif 4 signature appears at 265 to 276 (ELDELMASLSDF). Over residues 289–300 (RCWAADWPRDGG) the composition is skewed to basic and acidic residues. The segment at 289-335 (RCWAADWPRDGGRSSPGGQDEGGFMAQGKTGSSSPPGGPPKPGSQLD) is disordered. Residues S303, S322, S332, and S340 each carry the phosphoserine modification. The LD motif 5 motif lies at 333–345 (QLDSMLGSLQSDL). 4 consecutive LIM zinc-binding domains span residues 356 to 415 (GVCG…LFSP), 416 to 473 (RCYY…DMFA), 474 to 533 (PKCG…RRGS), and 534 to 591 (LCSG…KLFC). S533 carries the phosphoserine modification.

Belongs to the paxillin family. As to quaternary structure, binds to vinculin and to the SH3 domain of SRC. Interacts with GIT1, NUDT16L1/SDOS, PARVA, PARVB, SORBS1 and TGFB1I1. Component of cytoplasmic complexes, which also contain GIT1, ARHGEF6 and PAK1. Binds ASAP2. Interacts with RNF5 and PDCD10. Interacts with NEK3 and this interaction is prolactin-dependent. Interacts with PTK2/FAK1 and PTK2B/PYK2. Interacts with PTK6. Interacts with CD36. Interacts (via cytoplasmic domain) with CEACAM1; the interaction is phosphotyrosyl-dependent. Interacts with PXN; this complex stabilizes actin dynamics. Interacts with TRIM15. Interacts with PAK4; PAK4 acts as a scaffold to suppport PAXI phosphorylation at Ser-272. Phosphorylated by MAPK1/ERK2. Phosphorylated on tyrosine residues during integrin-mediated cell adhesion, embryonic development, fibroblast transformation and following stimulation of cells by mitogens. Phosphorylation at Ser-244 by CDK5 reduces its interaction with PTK2/FAK1 in matrix-cell focal adhesions (MCFA) during oligodendrocytes (OLs) differentiation. Phosphorylation at Tyr-31 and Tyr-118 by PTK6 promote the activation of RAC1 via CRK/CrKII, thereby promoting migration and invasion. Phosphorylation at Ser-250 by SLK is required for PXN redistribution and cell motility. Phosphorylation at Ser-272 promotes focal adhesion disassembly during cell migration.

The protein localises to the cytoplasm. The protein resides in the cytoskeleton. Its subcellular location is the cell junction. It is found in the focal adhesion. It localises to the cell cortex. Its function is as follows. Cytoskeletal protein involved in actin-membrane attachment at sites of cell adhesion to the extracellular matrix (focal adhesion). Recruits other proteins such as TRIM15 to focal adhesion. The protein is Paxillin (PXN) of Pongo abelii (Sumatran orangutan).